A 563-amino-acid chain; its full sequence is Alpha-humulene synthase (563 aa).

Mg(2+) is bound by residues Asp316, Asp320, Asp461, and Glu469. The DDXXD motif signature appears at 316-320 (DDIYD).

It belongs to the terpene synthase family. Tpsa subfamily. The cofactor is Mg(2+). Mn(2+) serves as cofactor. Expressed in trichomes, cones and young leaves.

It carries out the reaction (2E,6E)-farnesyl diphosphate = alpha-humulene + diphosphate. The protein operates within sesquiterpene biosynthesis. It participates in secondary metabolite biosynthesis; terpenoid biosynthesis. Its function is as follows. Sesquiterpene synthase that catalyzes the formation of alpha-humulene. Can use farnesyl diphosphate (FPP) as substrate, but not geranyl diphosphate (GPP) or geranylgeranyl diphosphate (GGPP). This is Alpha-humulene synthase from Humulus lupulus (European hop).